Reading from the N-terminus, the 710-residue chain is Elongation factor G (710 aa).

The tr-type G domain maps to 8 to 290 (SQYRNIGISA…AIVEYLPSPM (283 aa)). GTP contacts are provided by residues 17-24 (AHIDAGKT), 88-92 (DTPGH), and 142-145 (NKMD).

It belongs to the TRAFAC class translation factor GTPase superfamily. Classic translation factor GTPase family. EF-G/EF-2 subfamily.

The protein resides in the cytoplasm. Catalyzes the GTP-dependent ribosomal translocation step during translation elongation. During this step, the ribosome changes from the pre-translocational (PRE) to the post-translocational (POST) state as the newly formed A-site-bound peptidyl-tRNA and P-site-bound deacylated tRNA move to the P and E sites, respectively. Catalyzes the coordinated movement of the two tRNA molecules, the mRNA and conformational changes in the ribosome. The polypeptide is Elongation factor G (Buchnera aphidicola subsp. Baizongia pistaciae (strain Bp)).